The following is a 417-amino-acid chain: Histidine--tRNA ligase (417 aa).

The protein belongs to the class-II aminoacyl-tRNA synthetase family. In terms of assembly, homodimer.

Its subcellular location is the cytoplasm. It catalyses the reaction tRNA(His) + L-histidine + ATP = L-histidyl-tRNA(His) + AMP + diphosphate + H(+). The protein is Histidine--tRNA ligase of Acetivibrio thermocellus (strain ATCC 27405 / DSM 1237 / JCM 9322 / NBRC 103400 / NCIMB 10682 / NRRL B-4536 / VPI 7372) (Clostridium thermocellum).